The primary structure comprises 245 residues: tRNA1(Val) (adenine(37)-N6)-methyltransferase (245 aa).

The protein belongs to the methyltransferase superfamily. tRNA (adenine-N(6)-)-methyltransferase family.

Its subcellular location is the cytoplasm. It carries out the reaction adenosine(37) in tRNA1(Val) + S-adenosyl-L-methionine = N(6)-methyladenosine(37) in tRNA1(Val) + S-adenosyl-L-homocysteine + H(+). Specifically methylates the adenine in position 37 of tRNA(1)(Val) (anticodon cmo5UAC). In Salmonella enteritidis PT4 (strain P125109), this protein is tRNA1(Val) (adenine(37)-N6)-methyltransferase.